The chain runs to 1136 residues: Unconventional myosin-Ib (1136 aa).

Residues 15 to 701 (IGVGDTVLLE…TLFQLEDLRK (687 aa)) form the Myosin motor domain. Residue Ser-60 is modified to Phosphoserine. 108-115 (GESGAGKT) is a binding site for ATP. Residue Lys-287 forms a Glycyl lysine isopeptide (Lys-Gly) (interchain with G-Cter in SUMO1); alternate linkage. Lys-287 participates in a covalent cross-link: Glycyl lysine isopeptide (Lys-Gly) (interchain with G-Cter in SUMO2); alternate. The tract at residues 592–599 (YIRCIKPN) is actin-binding. 6 IQ domains span residues 704–729 (LEDLATLIQKIYRGWKCRTHFLLMKR), 730–750 (SQVVIAAWYRRYAQQKRYQQI), 750–778 (IKSSALVIQSYIRGWKARKILRELKHQKR), 780–807 (KEAATTIAAYWHGTQARKERRRLKDEAR), 808–837 (NKHAIAVIWAFWLGSKARRELKRLKEEARR), and 837–866 (RKHAVAVIWAYWLGLKVRREYRKFFRANAG). The TH1 domain occupies 952–1136 (KALYPSSVGQ…NNRLLEVAVP (185 aa)).

It belongs to the TRAFAC class myosin-kinesin ATPase superfamily. Myosin family.

Its function is as follows. Motor protein that may participate in process critical to neuronal development and function such as cell migration, neurite outgrowth and vesicular transport. The chain is Unconventional myosin-Ib (Myo1b) from Rattus norvegicus (Rat).